The primary structure comprises 142 residues: Hemoglobin subunit alpha-A (142 aa).

The region spanning 2–142 (VLTAGDKANV…VATALTSKYR (141 aa)) is the Globin domain. Heme b contacts are provided by histidine 59 and histidine 88.

This sequence belongs to the globin family. As to quaternary structure, heterotetramer of two alpha-A chains and two beta chains. In terms of tissue distribution, red blood cells.

Functionally, involved in oxygen transport from the lung to the various peripheral tissues. This chain is Hemoglobin subunit alpha-A, found in Chelonoidis niger (Galapagos giant tortoise).